We begin with the raw amino-acid sequence, 436 residues long: 3-ketoacyl-CoA thiolase (436 aa).

Cys99 (acyl-thioester intermediate) is an active-site residue. Residues His392 and Cys422 each act as proton acceptor in the active site.

The protein belongs to the thiolase-like superfamily. Thiolase family. In terms of assembly, heterotetramer of two alpha chains (FadJ) and two beta chains (FadI).

It localises to the cytoplasm. It catalyses the reaction an acyl-CoA + acetyl-CoA = a 3-oxoacyl-CoA + CoA. It functions in the pathway lipid metabolism; fatty acid beta-oxidation. Functionally, catalyzes the final step of fatty acid oxidation in which acetyl-CoA is released and the CoA ester of a fatty acid two carbons shorter is formed. The protein is 3-ketoacyl-CoA thiolase of Serratia proteamaculans (strain 568).